The sequence spans 388 residues: Chorismate synthase (388 aa).

2 residues coordinate NADP(+): Arg-39 and Arg-45. FMN-binding positions include 130–132 (RSS), 251–252 (NA), Gly-296, 311–315 (KPIPT), and Arg-337.

It belongs to the chorismate synthase family. As to quaternary structure, homotetramer. FMNH2 serves as cofactor.

It catalyses the reaction 5-O-(1-carboxyvinyl)-3-phosphoshikimate = chorismate + phosphate. The protein operates within metabolic intermediate biosynthesis; chorismate biosynthesis; chorismate from D-erythrose 4-phosphate and phosphoenolpyruvate: step 7/7. In terms of biological role, catalyzes the anti-1,4-elimination of the C-3 phosphate and the C-6 proR hydrogen from 5-enolpyruvylshikimate-3-phosphate (EPSP) to yield chorismate, which is the branch point compound that serves as the starting substrate for the three terminal pathways of aromatic amino acid biosynthesis. This reaction introduces a second double bond into the aromatic ring system. The polypeptide is Chorismate synthase (Lactococcus lactis subsp. cremoris (strain MG1363)).